Consider the following 600-residue polypeptide: MIEVLLVTICLAVFPYQGSSIILESGNVNDYEVVYPRKVTTLPKGALQQNYEDAMQYEFKVNGEPVVLHLEKNKELFSEDYSETHYSPDGREITTYPSVEDHCYYHGRIQNEADSTASISACNGLKGHFKLQGETYLIEPLKLPDSEAHAVFKYENVVKEDEAPKMCGVTETNWKSDEPIKKASQLVVTAEQQRFPRRYVKLAIVADRRMYMKHQKNLKPWVFQMVNSVHQIYRSMNVLIALVYLNIWKKNDKITVQSASDVTLDLFAEWRETVLLRRKKHDCAHLLTAIDFDGPTIGRAHIASMCNSKLSVGIVQNYTEINLVNAIVMAHELGHNLGISHDGNQCNCHTCIMSAVISNPPSERFSNCSEDYHQSFLTAYNPQCILNAPSKTDIITPPVCGNELLEEGEECDCGSPENCQYQCCDAASCKLHSWVKCESGECCDQCRFTSAGTECRAARSECDIAESCTGQSADCPTDDFHRNGQPCLSNHGYCYNGNCPVMHYQCIALFGSNAIVGQDECFDFNMKGEQYFYCRKEYEKYIPCAQEDVKCGRLFCFYTNNMDICRYNYSDIGIVDHGTKCADGKVCNSNRHCVDVTTVY.

The first 20 residues, 1–20, serve as a signal peptide directing secretion; that stretch reads MIEVLLVTICLAVFPYQGSS. A propeptide spanning residues 21–191 is cleaved from the precursor; the sequence is IILESGNVND…KASQLVVTAE (171 aa). Glutamine 192 is subject to Pyrrolidone carboxylic acid. Residues 198 to 389 enclose the Peptidase M12B domain; sequence RYVKLAIVAD…YNPQCILNAP (192 aa). Cystine bridges form between cysteine 306–cysteine 384, cysteine 346–cysteine 368, and cysteine 348–cysteine 351. N-linked (GlcNAc...) asparagine glycosylation occurs at asparagine 317. Residue histidine 331 participates in Zn(2+) binding. Glutamate 332 is an active-site residue. Positions 335 and 341 each coordinate Zn(2+). Residue asparagine 367 is glycosylated (N-linked (GlcNAc...) asparagine). Positions 397-483 constitute a Disintegrin domain; it reads PPVCGNELLE…DCPTDDFHRN (87 aa). Residues valine 399, asparagine 402, leucine 404, glutamate 406, glutamate 409, and aspartate 412 each coordinate Ca(2+). 14 disulfide bridges follow: cysteine 400–cysteine 429, cysteine 411–cysteine 424, cysteine 413–cysteine 419, cysteine 423–cysteine 446, cysteine 437–cysteine 443, cysteine 442–cysteine 468, cysteine 455–cysteine 475, cysteine 462–cysteine 494, cysteine 487–cysteine 499, cysteine 506–cysteine 556, cysteine 521–cysteine 565, cysteine 534–cysteine 544, cysteine 551–cysteine 587, and cysteine 581–cysteine 593. The short motif at 461 to 463 is the D/ECD-tripeptide element; sequence ECD. An N-linked (GlcNAc...) asparagine glycan is attached at asparagine 568.

The protein belongs to the venom metalloproteinase (M12B) family. P-III subfamily. P-IIIa sub-subfamily. In terms of assembly, monomer. The cofactor is Zn(2+). As to expression, expressed by the venom gland.

Its subcellular location is the secreted. Functionally, this metalloproteinase-disintegrin-like impairs hemostasis in the envenomed animal. The sequence is that of Zinc metalloproteinase-disintegrin-like stejnihagin-A from Trimeresurus stejnegeri (Chinese green tree viper).